Reading from the N-terminus, the 171-residue chain is Tetratricopeptide repeat protein 9C (171 aa).

3 TPR repeats span residues 8-41 (AQLY…LRGL), 72-107 (TDCY…QPEN), and 108-141 (AKAL…QPKD).

The protein belongs to the TTC9 family.

The polypeptide is Tetratricopeptide repeat protein 9C (Ttc9c) (Rattus norvegicus (Rat)).